Consider the following 247-residue polypeptide: Segregation and condensation protein A (247 aa).

Belongs to the ScpA family. Component of a cohesin-like complex composed of ScpA, ScpB and the Smc homodimer, in which ScpA and ScpB bind to the head domain of Smc. The presence of the three proteins is required for the association of the complex with DNA.

The protein resides in the cytoplasm. Participates in chromosomal partition during cell division. May act via the formation of a condensin-like complex containing Smc and ScpB that pull DNA away from mid-cell into both cell halves. The chain is Segregation and condensation protein A from Bacillus cereus (strain AH187).